We begin with the raw amino-acid sequence, 548 residues long: Membrane protein insertase YidC (548 aa).

A helical transmembrane segment spans residues Asn-6–Asp-26. Residues Asn-28–Ser-55 are disordered. Low complexity predominate over residues Gln-30–Gln-50. A run of 4 helical transmembrane segments spans residues Phe-350–Tyr-370, Leu-420–Leu-440, Leu-458–Ile-478, and Pro-499–Val-519.

This sequence belongs to the OXA1/ALB3/YidC family. Type 1 subfamily. In terms of assembly, interacts with the Sec translocase complex via SecD. Specifically interacts with transmembrane segments of nascent integral membrane proteins during membrane integration.

It localises to the cell inner membrane. Required for the insertion and/or proper folding and/or complex formation of integral membrane proteins into the membrane. Involved in integration of membrane proteins that insert both dependently and independently of the Sec translocase complex, as well as at least some lipoproteins. Aids folding of multispanning membrane proteins. This is Membrane protein insertase YidC from Escherichia coli O139:H28 (strain E24377A / ETEC).